Reading from the N-terminus, the 530-residue chain is MLNYKNLNELENFKILEGIAPEVLKTALTGKRIKEYDITIEGDSVHYNYASKQINETHLKIFQNLSDEANLIEKYKEVLDGEKINISENRKVLHHLTRGQIGKDVIEDNKENMREFFQSELEKIYNFAKQIHSGNIKSSNGKKFKNVVQIGIGGSSLGPKALYSSIKNYAKKHNLALMNGYFISNIDPDESEEVLSSINVDETLFIIVSKSGNTLETKANMQFLINKLKLNGIKEYKKQMVIITLKDSMLAIEEKGYLEYFFMHDSIGGRFSPTSAVGLTLLTLCFTEKVAKEILKGANEADKKSLNKNVKDNASLLAALISIYERNVLNYSSNCIIAYSKAMENFYLHLQQLEMESNGKSVNRFNETINYKTVRIIWGGIGTDVQHSFFQMLHQGTDIVPMDFIGFNETQLKEDVISDNSSSNDKLKANLIAQIIAFSKGKENSNKNKNFQGERPSALIYSKELTPYAIGAILSHYENKVMFEGFLLNINSFDQEGVQLGKIIANQILKNDNFKDEVIESYSKKILKKF.

Glutamate 356 functions as the Proton donor in the catalytic mechanism. Active-site residues include histidine 387 and lysine 502.

It belongs to the GPI family.

The protein resides in the cytoplasm. The enzyme catalyses alpha-D-glucose 6-phosphate = beta-D-fructose 6-phosphate. It functions in the pathway carbohydrate biosynthesis; gluconeogenesis. Its pathway is carbohydrate degradation; glycolysis; D-glyceraldehyde 3-phosphate and glycerone phosphate from D-glucose: step 2/4. Catalyzes the reversible isomerization of glucose-6-phosphate to fructose-6-phosphate. This is Glucose-6-phosphate isomerase from Borreliella burgdorferi (strain ATCC 35210 / DSM 4680 / CIP 102532 / B31) (Borrelia burgdorferi).